The chain runs to 135 residues: Large ribosomal subunit protein mL41A (135 aa).

The N-terminal 13 residues, 1–13 (MGLISKIARGLVR), are a transit peptide targeting the mitochondrion.

It belongs to the mitochondrion-specific ribosomal protein mL41 family. In terms of assembly, component of the mitochondrial ribosome large subunit (39S) which comprises a 16S rRNA and about 50 distinct proteins.

Its subcellular location is the mitochondrion. Functionally, component of the mitochondrial ribosome large subunit. Also involved in apoptosis and cell cycle. In Xenopus laevis (African clawed frog), this protein is Large ribosomal subunit protein mL41A (mrpl41-a).